Consider the following 358-residue polypeptide: MAGAKDSGCDDDLRIAGGCDPGKRGNPEDSSSPVEVSCSICLESVLDDGTRSKAKLQCGHQFHLDCIGSAFNMKGAMQCPNCRNVEKGQWLYANGSTRPFPEFSMEDWIPEEDLYGLSYPEMQYRVHWCPFGELSQAAASFEELEPATTTYHTEFHGHHAAAVNHSYLAYVGPGPAATPRTSDNNSTDDHPWNSHSNDHFHQLPVAPQYHHHSPSFSLPAAHVVDGEVDSSAARGLPYAHPFLFSHRSNQRSSPAINSYQGSSTQMREQHHAYNHQRQQHHANGPTLASPLISMTRRGLPPPPPPPPMPDQNVGFFIYPGGHHEPETDQIHAWERDWFPHFPVPSNHRTIPSLWHRHF.

The tract at residues 1–34 (MAGAKDSGCDDDLRIAGGCDPGKRGNPEDSSSPV) is disordered. The segment at 38 to 83 (CSICLESVLDDGTRSKAKLQCGHQFHLDCIGSAFNMKGAMQCPNCR) adopts an RING-type; atypical zinc-finger fold. 2 disordered regions span residues 174 to 201 (GPAA…DHFH) and 248 to 313 (SNQR…DQNV). Residues 187–201 (TDDHPWNSHSNDHFH) show a composition bias toward basic and acidic residues. Residues 248–266 (SNQRSSPAINSYQGSSTQM) are compositionally biased toward polar residues. Positions 299–309 (LPPPPPPPPMP) are enriched in pro residues.

It is found in the nucleus. It catalyses the reaction S-ubiquitinyl-[E2 ubiquitin-conjugating enzyme]-L-cysteine + [acceptor protein]-L-lysine = [E2 ubiquitin-conjugating enzyme]-L-cysteine + N(6)-ubiquitinyl-[acceptor protein]-L-lysine.. It functions in the pathway protein modification; protein ubiquitination. Its function is as follows. Mediates phytochrome (phyA and phyB)-controlled seedling deetiolation responses such as hypocotyl elongation in response to red and far-red light. Required for light-induced expression of LHCB3 and CHALCONE SYNTHASE (CHS). Negatively regulates CONSTANS (CO) and FLOWERING LOCUS T (FT) expression and photoperiodic flowering. The sequence is that of E3 ubiquitin-protein ligase RFI2 from Arabidopsis thaliana (Mouse-ear cress).